Consider the following 62-residue polypeptide: Sperm protamine P1 (62 aa).

The interval 1–62 is disordered; it reads MARYRHSXSR…RYSRRRRRRY (62 aa).

It belongs to the protamine P1 family. In terms of tissue distribution, testis.

Its subcellular location is the nucleus. The protein resides in the chromosome. Protamines substitute for histones in the chromatin of sperm during the haploid phase of spermatogenesis. They compact sperm DNA into a highly condensed, stable and inactive complex. In Petrogale xanthopus (Yellow-footed rock wallaby), this protein is Sperm protamine P1 (PRM1).